The chain runs to 214 residues: MSLSTPLITDSVIQAAHWLKKGQLLAYPTESVWGIGCDPFNQQAVMQLLTIKQRPIEKGMIVVTDSPSRITVLLEGLDAVERQTVLDSWQTDSINGTAKQAHTWLLPISQKLLITIPSWITGAHDSVAVRVIDHPLVKQLCAQMVSASNPYGFVVSTSCNPAGQPPALSLSEAQRYFLRHHANSNECVGYLKGETLGYQLPSQIGDALTGQIIR.

In terms of domain architecture, YrdC-like spans 9–214 (TDSVIQAAHW…GDALTGQIIR (206 aa)).

This sequence belongs to the SUA5 family. TsaC subfamily.

The protein localises to the cytoplasm. The enzyme catalyses L-threonine + hydrogencarbonate + ATP = L-threonylcarbamoyladenylate + diphosphate + H2O. Required for the formation of a threonylcarbamoyl group on adenosine at position 37 (t(6)A37) in tRNAs that read codons beginning with adenine. Catalyzes the conversion of L-threonine, HCO(3)(-)/CO(2) and ATP to give threonylcarbamoyl-AMP (TC-AMP) as the acyladenylate intermediate, with the release of diphosphate. The protein is Threonylcarbamoyl-AMP synthase of Psychrobacter arcticus (strain DSM 17307 / VKM B-2377 / 273-4).